An 844-amino-acid polypeptide reads, in one-letter code: E3 ubiquitin-protein ligase BRE1-like 2 (844 aa).

Coiled-coil stretches lie at residues 1–38 and 160–240; these read MDAA…RDEQ and EDVI…QLQT. Residues 244-269 form a disordered region; the sequence is SLMNTSAPNGVNGSVSTDKSSDKGMG. Residues 245-261 are compositionally biased toward polar residues; sequence LMNTSAPNGVNGSVSTD. 2 coiled-coil regions span residues 290-604 and 640-670; these read ELHE…SEIE and KMKQ…ESSK. The RING-type zinc finger occupies 792-831; it reads CGVCFDRPKEVVITKCFHLFCSPCIQRNLEIRHRKCPGCG.

The protein belongs to the BRE1 family.

It localises to the nucleus. It catalyses the reaction S-ubiquitinyl-[E2 ubiquitin-conjugating enzyme]-L-cysteine + [acceptor protein]-L-lysine = [E2 ubiquitin-conjugating enzyme]-L-cysteine + N(6)-ubiquitinyl-[acceptor protein]-L-lysine.. It participates in protein modification; protein ubiquitination. Functionally, E3 ubiquitin-protein ligase that monoubiquitinates H2B to form H2BK143ub1. H2BK143ub1 gives a specific tag for epigenetic transcriptional activation and is also prerequisite for H3K4me and maybe H3K79me. It thereby plays a central role in histone code and gene regulation. Forms a ubiquitin ligase complex in cooperation with the E2 enzyme UBC2/RAD6. The chain is E3 ubiquitin-protein ligase BRE1-like 2 (BRE1B) from Oryza sativa subsp. indica (Rice).